We begin with the raw amino-acid sequence, 311 residues long: Long form salivary protein D7L1 (311 aa).

Residues 1–16 (MKALIFLGAIIAGVLS) form the signal peptide. 2 cysteine pairs are disulfide-bonded: Cys-34–Cys-67 and Cys-63–Cys-120. Residues Ser-146, Arg-149, Tyr-153, and Lys-160 each coordinate ADP. 3 cysteine pairs are disulfide-bonded: Cys-170–Cys-202, Cys-183–Cys-311, and Cys-244–Cys-258. ADP contacts are provided by Asn-281, Tyr-282, and Ser-283.

Belongs to the PBP/GOBP family. As to expression, distal lateral and medial lobes of female mosquito salivary gland (at protein level). Expressed in the head and thorax of the female mosquitoes, where the salivary glands are located. Expressed in salivary gland. Not detected in the female mosquito abdomen. Not detected in the male mosquito tissues.

It localises to the secreted. Functionally, modulates blood feeding of female mosquitoes on vertebrate species by binding and sequestering different mediators involved in the host response. Binds adenine, adenosine, AMP, ADP and ATP, with the highest affinity to ATP and ADP. Inhibits agonist-induced platelet aggregation and hemostasis. This chain is Long form salivary protein D7L1, found in Culex quinquefasciatus (Southern house mosquito).